The sequence spans 396 residues: Elongation factor Tu (396 aa).

The tr-type G domain maps to 10–205 (KPHVNIGTIG…AVDESIPAPV (196 aa)). Residues 19–26 (GHVDHGKT) form a G1 region. 19 to 26 (GHVDHGKT) is a binding site for GTP. Threonine 26 lines the Mg(2+) pocket. The G2 stretch occupies residues 62–66 (GITIN). Positions 83 to 86 (DAPG) are G3. GTP contacts are provided by residues 83-87 (DAPGH) and 138-141 (NKSD). Residues 138–141 (NKSD) form a G4 region. A G5 region spans residues 175 to 177 (SAL).

It belongs to the TRAFAC class translation factor GTPase superfamily. Classic translation factor GTPase family. EF-Tu/EF-1A subfamily. In terms of assembly, monomer.

Its subcellular location is the cytoplasm. The enzyme catalyses GTP + H2O = GDP + phosphate + H(+). GTP hydrolase that promotes the GTP-dependent binding of aminoacyl-tRNA to the A-site of ribosomes during protein biosynthesis. The polypeptide is Elongation factor Tu (Mycobacterium leprae (strain Br4923)).